The primary structure comprises 769 residues: Serine/threonine-protein kinase PLK4 (769 aa).

The 254-residue stretch at 10 to 263 folds into the Protein kinase domain; that stretch reads YEVYEILGKG…LDQVLQHPFM (254 aa). ATP is bound by residues 16 to 24 and K39; that span reads LGKGGFASV. The active-site Proton acceptor is D134. Disordered regions lie at residues 280–304, 337–380, and 592–651; these read SSDS…SSYG, PQQR…LDIP, and APLT…VLSS. The segment covering 337–371 has biased composition (polar residues); it reads PQQRPQSASHNKPTSDFFSGISNDPRTMAPSSPTK. Positions 374 to 491 constitute a Cryptic POLO box 1 (CPB1) domain; it reads KKRLDIPPLN…ARFVQMVKAK (118 aa). Residues 492–595 form the Cryptic POLO box 2 (CPB2) domain; that stretch reads TPKITYYSEK…GRRPANAPLT (104 aa). Positions 605-648 are enriched in polar residues; it reads TKENQLYSNISSPNTPQTPHQMPSFAMSTASHTSAGNPLTQRPV. In terms of domain architecture, POLO box spans 662–745; sequence AMKKCTIAGV…MPAILRELNA (84 aa).

Belongs to the protein kinase superfamily. Ser/Thr protein kinase family. CDC5/Polo subfamily. Homodimer. In terms of processing, ubiquitinated; leading to its degradation by the proteasome.

It localises to the cytoplasm. It is found in the cytoskeleton. The protein localises to the microtubule organizing center. Its subcellular location is the centrosome. The protein resides in the centriole. The enzyme catalyses L-seryl-[protein] + ATP = O-phospho-L-seryl-[protein] + ADP + H(+). The catalysed reaction is L-threonyl-[protein] + ATP = O-phospho-L-threonyl-[protein] + ADP + H(+). Its function is as follows. Serine/threonine-protein kinase that plays a central role in centriole duplication. Able to trigger procentriole formation on the surface of the mother centriole cylinder, leading to the recruitment of centriole biogenesis proteins. When overexpressed, it is able to induce centrosome amplification through the simultaneous generation of multiple procentrioles adjoining each parental centriole during S phase. The protein is Serine/threonine-protein kinase PLK4 (SAK) of Aedes aegypti (Yellowfever mosquito).